Consider the following 145-residue polypeptide: Brain and acute leukemia cytoplasmic protein (145 aa).

Residue Gly2 is the site of N-myristoyl glycine attachment. Residue Cys3 is the site of S-palmitoyl cysteine attachment. The interaction with CAMK2A stretch occupies residues 3–35 (CGGSRADAIEPRYYESWTRETESTWLTYTDSDA). Disordered regions lie at residues 36–56 (LPSA…AGVL) and 87–109 (CPNS…WATE). The span at 87–105 (CPNSQNLSSGPLTQKQNGL) shows a compositional bias: polar residues.

As to quaternary structure, interacts with CAMK2A. Post-translationally, palmitoylation and myristoylation target the protein to the lipid rafts. In terms of tissue distribution, at the mRNA level, predominantly expressed in the brain. At the protein level, mainly expressed in muscle tissues. In skeletal muscles, expressed in cranial and facial muscles, muscles of the neck, back, thoracic wall, and thigh. Also found in the contractile myoepithelial cell layer of salivary glands. In smooth muscles, expressed in the gastric wall, uterus, urinary bladder, as well as in the muscular lining around seminiferous tubules, prostatic ducts, epididymis, vas deferens, walls of small blood vessels in the dermis, and fascial layers between muscle fibers, brain, and around the spinal cord. Strongly expressed in myocardium. High expression levels are observed in placental spongiotrophoblast and adjacent myometrium. Also expressed in bone marrow hematopoietic cells. In the mature thymus, expressed in rare scattered cells. Weakly expressed in the brain neuropil, particularly near the hippocampus, and spinal cord white matter. Not detected in skin keratinocytes or lung (at protein level).

It localises to the cytoplasm. The protein resides in the synapse. Its subcellular location is the synaptosome. It is found in the membrane raft. The protein localises to the postsynaptic density. Its function is as follows. May play a synaptic role at the postsynaptic lipid rafts possibly through interaction with CAMK2A. The chain is Brain and acute leukemia cytoplasmic protein (Baalc) from Mus musculus (Mouse).